The sequence spans 688 residues: Hid-1 family protein P19A11.07c (688 aa).

Belongs to the hid-1 family.

The protein resides in the cytoplasm. It localises to the nucleus. This Schizosaccharomyces pombe (strain 972 / ATCC 24843) (Fission yeast) protein is Hid-1 family protein P19A11.07c.